A 219-amino-acid chain; its full sequence is Melanoma-associated antigen H1 (219 aa).

The span at 1–13 shows a compositional bias: basic residues; that stretch reads MPRGRKSRRRRNA. Positions 1 to 84 are disordered; the sequence is MPRGRKSRRR…QKPSVPRSNF (84 aa). The 198-residue stretch at 1 to 198 folds into the MAGE domain; it reads MPRGRKSRRR…KDWPCNYDWD (198 aa). Over residues 44–57 the composition is skewed to acidic residues; that stretch reads PEDDLSGPEEDPST. Residues 58–74 are compositionally biased toward low complexity; that stretch reads PEEASTTPEEASSTAQA. Tyr-195 carries the post-translational modification Phosphotyrosine.

The sequence is that of Melanoma-associated antigen H1 (MAGEH1) from Homo sapiens (Human).